The chain runs to 207 residues: Thymidylate kinase (207 aa).

7 to 14 (GCEGTGKT) contributes to the ATP binding site.

Belongs to the thymidylate kinase family.

It carries out the reaction dTMP + ATP = dTDP + ADP. Its function is as follows. Phosphorylation of dTMP to form dTDP in both de novo and salvage pathways of dTTP synthesis. The sequence is that of Thymidylate kinase from Aster yellows witches'-broom phytoplasma (strain AYWB).